Consider the following 215-residue polypeptide: MPPSPLTDIQVRYLGRRDYRETWSAMRRYTDERGPDTPDQLWVVSHPPVYTLGQAGRREHILDPGEIPVVETDRGGQVTYHGPGQIVLYPLLDLRRWGLGVRSLVSALEHTVISLLAGYGIASEARDDAPGVYVEGRKVASVGLRVRRGCSYHGLAVNVDVDLEPFLRINPCGYPGLEVTRLLDLGVPTPYERLEADLALHCLEAIVEYGNGGAA.

One can recognise a BPL/LPL catalytic domain in the interval P35 to G210. Substrate contacts are provided by residues R74–H81, S141–G143, and G154–A156. C172 acts as the Acyl-thioester intermediate in catalysis.

Belongs to the LipB family.

It localises to the cytoplasm. It carries out the reaction octanoyl-[ACP] + L-lysyl-[protein] = N(6)-octanoyl-L-lysyl-[protein] + holo-[ACP] + H(+). It functions in the pathway protein modification; protein lipoylation via endogenous pathway; protein N(6)-(lipoyl)lysine from octanoyl-[acyl-carrier-protein]: step 1/2. Catalyzes the transfer of endogenously produced octanoic acid from octanoyl-acyl-carrier-protein onto the lipoyl domains of lipoate-dependent enzymes. Lipoyl-ACP can also act as a substrate although octanoyl-ACP is likely to be the physiological substrate. The sequence is that of Octanoyltransferase from Alkalilimnicola ehrlichii (strain ATCC BAA-1101 / DSM 17681 / MLHE-1).